Consider the following 558-residue polypeptide: Arginine--tRNA ligase (558 aa).

A 'HIGH' region motif is present at residues 119–129; sequence ANPDGPLHVGH.

The protein belongs to the class-I aminoacyl-tRNA synthetase family.

The protein resides in the cytoplasm. It catalyses the reaction tRNA(Arg) + L-arginine + ATP = L-arginyl-tRNA(Arg) + AMP + diphosphate. The chain is Arginine--tRNA ligase from Methanothrix thermoacetophila (strain DSM 6194 / JCM 14653 / NBRC 101360 / PT) (Methanosaeta thermophila).